The sequence spans 417 residues: DNA-directed RNA polymerase subunit beta (417 aa).

It belongs to the RNA polymerase beta chain family. In terms of assembly, in plastids the minimal PEP RNA polymerase catalytic core is composed of four subunits: alpha, beta, beta', and beta''. When a (nuclear-encoded) sigma factor is associated with the core the holoenzyme is formed, which can initiate transcription.

Its subcellular location is the plastid. It is found in the chloroplast. The enzyme catalyses RNA(n) + a ribonucleoside 5'-triphosphate = RNA(n+1) + diphosphate. Its function is as follows. DNA-dependent RNA polymerase catalyzes the transcription of DNA into RNA using the four ribonucleoside triphosphates as substrates. This chain is DNA-directed RNA polymerase subunit beta (rpoB), found in Saponaria officinalis (Common soapwort).